The chain runs to 169 residues: Peptide methionine sulfoxide reductase MsrA (169 aa).

C10 is an active-site residue.

This sequence belongs to the MsrA Met sulfoxide reductase family.

It catalyses the reaction L-methionyl-[protein] + [thioredoxin]-disulfide + H2O = L-methionyl-(S)-S-oxide-[protein] + [thioredoxin]-dithiol. It carries out the reaction [thioredoxin]-disulfide + L-methionine + H2O = L-methionine (S)-S-oxide + [thioredoxin]-dithiol. In terms of biological role, has an important function as a repair enzyme for proteins that have been inactivated by oxidation. Catalyzes the reversible oxidation-reduction of methionine sulfoxide in proteins to methionine. In Streptococcus equi subsp. zooepidemicus (strain H70), this protein is Peptide methionine sulfoxide reductase MsrA.